The primary structure comprises 370 residues: Queuine tRNA-ribosyltransferase (370 aa).

Residue D89 is the Proton acceptor of the active site. Residues 89–93, D143, Q187, and G214 each bind substrate; that span reads DSGGF. The segment at 245 to 251 is RNA binding; it reads GVGTPED. Catalysis depends on D264, which acts as the Nucleophile. The segment at 269–273 is RNA binding; important for wobble base 34 recognition; sequence TRNAR. Zn(2+)-binding residues include C302, C304, C307, and H333.

It belongs to the queuine tRNA-ribosyltransferase family. As to quaternary structure, homodimer. Within each dimer, one monomer is responsible for RNA recognition and catalysis, while the other monomer binds to the replacement base PreQ1. The cofactor is Zn(2+).

The catalysed reaction is 7-aminomethyl-7-carbaguanine + guanosine(34) in tRNA = 7-aminomethyl-7-carbaguanosine(34) in tRNA + guanine. Its pathway is tRNA modification; tRNA-queuosine biosynthesis. In terms of biological role, catalyzes the base-exchange of a guanine (G) residue with the queuine precursor 7-aminomethyl-7-deazaguanine (PreQ1) at position 34 (anticodon wobble position) in tRNAs with GU(N) anticodons (tRNA-Asp, -Asn, -His and -Tyr). Catalysis occurs through a double-displacement mechanism. The nucleophile active site attacks the C1' of nucleotide 34 to detach the guanine base from the RNA, forming a covalent enzyme-RNA intermediate. The proton acceptor active site deprotonates the incoming PreQ1, allowing a nucleophilic attack on the C1' of the ribose to form the product. After dissociation, two additional enzymatic reactions on the tRNA convert PreQ1 to queuine (Q), resulting in the hypermodified nucleoside queuosine (7-(((4,5-cis-dihydroxy-2-cyclopenten-1-yl)amino)methyl)-7-deazaguanosine). The chain is Queuine tRNA-ribosyltransferase from Azoarcus sp. (strain BH72).